Consider the following 25-residue polypeptide: Ranatuerin-1C (25 aa).

A disulfide bond links Cys19 and Cys25.

In terms of tissue distribution, expressed by the skin glands.

It is found in the secreted. Antibacterial activity against Gram-positive bacterium S.aureus (MIC=55 uM) and Gram-negative bacterium E.coli (MIC=1.5 uM). Has activity against C.albicans (MIC=58 uM). This chain is Ranatuerin-1C, found in Lithobates clamitans (Green frog).